The primary structure comprises 348 residues: tRNA N6-adenosine threonylcarbamoyltransferase (348 aa).

Positions 111 and 115 each coordinate Fe cation. Substrate contacts are provided by residues 134–138 (LVSGG), Asp-167, Gly-180, Asp-184, and Asn-280. Asp-308 serves as a coordination point for Fe cation.

It belongs to the KAE1 / TsaD family. Fe(2+) is required as a cofactor.

It is found in the cytoplasm. The enzyme catalyses L-threonylcarbamoyladenylate + adenosine(37) in tRNA = N(6)-L-threonylcarbamoyladenosine(37) in tRNA + AMP + H(+). Required for the formation of a threonylcarbamoyl group on adenosine at position 37 (t(6)A37) in tRNAs that read codons beginning with adenine. Is involved in the transfer of the threonylcarbamoyl moiety of threonylcarbamoyl-AMP (TC-AMP) to the N6 group of A37, together with TsaE and TsaB. TsaD likely plays a direct catalytic role in this reaction. The sequence is that of tRNA N6-adenosine threonylcarbamoyltransferase from Rippkaea orientalis (strain PCC 8801 / RF-1) (Cyanothece sp. (strain PCC 8801)).